A 171-amino-acid polypeptide reads, in one-letter code: 6,7-dimethyl-8-ribityllumazine synthase (171 aa).

5-amino-6-(D-ribitylamino)uracil contacts are provided by residues F24, 58–60 (ALE), and 82–84 (AVI). Residue 87 to 88 (ET) coordinates (2S)-2-hydroxy-3-oxobutyl phosphate. H90 serves as the catalytic Proton donor. Position 115 (N115) interacts with 5-amino-6-(D-ribitylamino)uracil. R129 contacts (2S)-2-hydroxy-3-oxobutyl phosphate. The disordered stretch occupies residues 150 to 171 (ALDQLGDDEDEEEDEDDEEERA). Residues 154-171 (LGDDEDEEEDEDDEEERA) show a composition bias toward acidic residues.

The protein belongs to the DMRL synthase family.

It carries out the reaction (2S)-2-hydroxy-3-oxobutyl phosphate + 5-amino-6-(D-ribitylamino)uracil = 6,7-dimethyl-8-(1-D-ribityl)lumazine + phosphate + 2 H2O + H(+). Its pathway is cofactor biosynthesis; riboflavin biosynthesis; riboflavin from 2-hydroxy-3-oxobutyl phosphate and 5-amino-6-(D-ribitylamino)uracil: step 1/2. In terms of biological role, catalyzes the formation of 6,7-dimethyl-8-ribityllumazine by condensation of 5-amino-6-(D-ribitylamino)uracil with 3,4-dihydroxy-2-butanone 4-phosphate. This is the penultimate step in the biosynthesis of riboflavin. This chain is 6,7-dimethyl-8-ribityllumazine synthase, found in Burkholderia cenocepacia (strain HI2424).